A 176-amino-acid chain; its full sequence is Adenine phosphoribosyltransferase (176 aa).

It belongs to the purine/pyrimidine phosphoribosyltransferase family. As to quaternary structure, homodimer.

It is found in the cytoplasm. The enzyme catalyses AMP + diphosphate = 5-phospho-alpha-D-ribose 1-diphosphate + adenine. Its pathway is purine metabolism; AMP biosynthesis via salvage pathway; AMP from adenine: step 1/1. Catalyzes a salvage reaction resulting in the formation of AMP, that is energically less costly than de novo synthesis. The polypeptide is Adenine phosphoribosyltransferase (Borreliella burgdorferi (strain ATCC 35210 / DSM 4680 / CIP 102532 / B31) (Borrelia burgdorferi)).